We begin with the raw amino-acid sequence, 300 residues long: Probable alpha-L-glutamate ligase (300 aa).

Residues 104–287 (LQLLARQGID…IASRMIAWIE (184 aa)) form the ATP-grasp domain. Residues K141, 178–179 (EY), D187, and 211–213 (RSN) each bind ATP. Mg(2+) is bound by residues D248, E260, and N262. The Mn(2+) site is built by D248, E260, and N262.

This sequence belongs to the RimK family. The cofactor is Mg(2+). Requires Mn(2+) as cofactor.

This is Probable alpha-L-glutamate ligase from Klebsiella pneumoniae (strain 342).